Here is a 90-residue protein sequence, read N- to C-terminus: Large ribosomal subunit protein bL27 (90 aa).

The protein belongs to the bacterial ribosomal protein bL27 family.

The sequence is that of Large ribosomal subunit protein bL27 from Rhodopseudomonas palustris (strain BisB5).